A 1829-amino-acid polypeptide reads, in one-letter code: Protein TIC 214 (1829 aa).

The next 6 membrane-spanning stretches (helical) occupy residues 18 to 38 (IINSVVVVGLYYGFMTTFSIG), 67 to 87 (FIAGQLMMFISIYYAPLHLAL), 90 to 110 (PHTITVLALPYLLFHFFWNNP), 127 to 147 (LSIQCVFLNNLIFQLFNHFLL), 174 to 194 (FVGWLIGHILFMKWVGLVLVW), and 224 to 244 (IFSILLFITCIYYLGRIPSPI). The segment covering 260–272 (RDVEIEKTFERGG) has biased composition (basic and acidic residues). A disordered region spans residues 260 to 301 (RDVEIEKTFERGGTKQGQEVSAEEDPSPSLFSEEKEDPDKIE).

This sequence belongs to the TIC214 family. As to quaternary structure, part of the Tic complex.

It localises to the plastid. Its subcellular location is the chloroplast inner membrane. Involved in protein precursor import into chloroplasts. May be part of an intermediate translocation complex acting as a protein-conducting channel at the inner envelope. In Citrus sinensis (Sweet orange), this protein is Protein TIC 214.